Reading from the N-terminus, the 396-residue chain is Chalcone synthase (396 aa).

Residue C169 is part of the active site.

Belongs to the thiolase-like superfamily. Chalcone/stilbene synthases family.

It catalyses the reaction (E)-4-coumaroyl-CoA + 3 malonyl-CoA + 3 H(+) = 2',4,4',6'-tetrahydroxychalcone + 3 CO2 + 4 CoA. It functions in the pathway secondary metabolite biosynthesis; flavonoid biosynthesis. In terms of biological role, the primary product of this enzyme is 4,2',4',6'-tetrahydroxychalcone (also termed naringenin-chalcone or chalcone) which can under specific conditions spontaneously isomerize into naringenin. This chain is Chalcone synthase (CHS), found in Pinus sylvestris (Scotch pine).